Consider the following 287-residue polypeptide: MQTEIDASVIVKEKEWLETNVLPEFWESMSEGLKEALNLISSDDPTVLVFTSPKTDAVKGIVSRSSSNVVRVNVTAKVGRTTHVLKLKDSAIIHLDQILNLSNYMHYALYCLPRLRHNTERAIKELQEILHAIVCLLHSIMQEESEKEEIPSNASSISLKSQNSIVSRTSNPFSCLNHSPRQIHKTVRNHLFSPPLPSNLALSFSISNASVCLHLFRLSGPNEVLESFAKNSVDIEMLKPFVSQRIDAFSQDPILLAVTAKLSALQKKVNDVSYRFKTISSSLYGAK.

In terms of assembly, component of the RAVE complex composed of rav1, rav2 and skp1.

The protein resides in the cytoplasm. It is found in the nucleus. Functionally, component of the RAVE complex which is required for stable assembly of the vacuolar ATPase complex V-ATPase. This Schizosaccharomyces pombe (strain 972 / ATCC 24843) (Fission yeast) protein is Regulator of V-ATPase in vacuolar membrane protein 2 (rav2).